A 174-amino-acid polypeptide reads, in one-letter code: MSKIIVASANPAKISAVASAFSQAFPEQSFTVEGISVASEVRDQPLCADETLLGARNRVKNARKLQADADFYVGLEAGIDGGFTFAWMVIENHKQRGEARSASLPLPPIALEKIQQGIELGDVMDDMFNQQNVKQKGGAIAMLTNHTLSRSSVYQQALILALIPFMNEQWFPCR.

A Mg(2+)-binding site is contributed by D68. 68–69 (DA) lines the substrate pocket.

The protein belongs to the YjjX NTPase family. As to quaternary structure, homodimer. Mg(2+) is required as a cofactor. It depends on Mn(2+) as a cofactor.

The catalysed reaction is XTP + H2O = XDP + phosphate + H(+). It carries out the reaction ITP + H2O = IDP + phosphate + H(+). Functionally, phosphatase that hydrolyzes non-canonical purine nucleotides such as XTP and ITP to their respective diphosphate derivatives. Probably excludes non-canonical purines from DNA/RNA precursor pool, thus preventing their incorporation into DNA/RNA and avoiding chromosomal lesions. This chain is Inosine/xanthosine triphosphatase, found in Photobacterium profundum (strain SS9).